We begin with the raw amino-acid sequence, 62 residues long: Mu-conotoxin Lt5d (62 aa).

The N-terminal stretch at methionine 1–alanine 22 is a signal peptide. Positions glutamine 23–asparagine 48 are excised as a propeptide.

It belongs to the conotoxin T superfamily. In terms of processing, contains 2 disulfide bonds that can be either 'C1-C3, C2-C4' or 'C1-C4, C2-C3', since these disulfide connectivities have been observed for conotoxins with cysteine framework V (for examples, see AC P0DQQ7 and AC P81755). In terms of tissue distribution, expressed by the venom duct.

The protein localises to the secreted. In terms of biological role, mu-conotoxins block voltage-gated sodium channels (Nav). This toxin inhibits tetrodotoxin(TTX)-sensitive sodium channels, but does not affect TTX-resistant sodium channels. Reduces the amplitude of currents without changing the activation and inactivation kinetics of currents. The chain is Mu-conotoxin Lt5d from Conus litteratus (Lettered cone).